We begin with the raw amino-acid sequence, 642 residues long: Threonine--tRNA ligase (642 aa).

The TGS domain occupies M1 to T61. The tract at residues D243–P534 is catalytic. Residues C334, H385, and H511 each coordinate Zn(2+).

Belongs to the class-II aminoacyl-tRNA synthetase family. In terms of assembly, homodimer. The cofactor is Zn(2+).

It localises to the cytoplasm. It catalyses the reaction tRNA(Thr) + L-threonine + ATP = L-threonyl-tRNA(Thr) + AMP + diphosphate + H(+). Catalyzes the attachment of threonine to tRNA(Thr) in a two-step reaction: L-threonine is first activated by ATP to form Thr-AMP and then transferred to the acceptor end of tRNA(Thr). Also edits incorrectly charged L-seryl-tRNA(Thr). This chain is Threonine--tRNA ligase, found in Pectobacterium carotovorum subsp. carotovorum (strain PC1).